The sequence spans 254 residues: Small ribosomal subunit protein uS2 (254 aa).

It belongs to the universal ribosomal protein uS2 family.

The protein is Small ribosomal subunit protein uS2 of Oceanobacillus iheyensis (strain DSM 14371 / CIP 107618 / JCM 11309 / KCTC 3954 / HTE831).